The sequence spans 199 residues: Putative lectin L633 (199 aa).

The N-terminal stretch at 1 to 25 (MNILLLLMLLTSIILLVILIFLAYN) is a signal peptide. Residues 35–48 (CITPAPESQSISPD) show a composition bias toward polar residues. The tract at residues 35-74 (CITPAPESQSISPDQTTQLQTTTPVTSTPSNPTPTTIIPN) is disordered. The segment covering 49-73 (QTTQLQTTTPVTSTPSNPTPTTIIP) has biased composition (low complexity). One can recognise a Bulb-type lectin domain in the interval 84-195 (EIVSNGDNVL…LGQELWCATR (112 aa)). The N-linked (GlcNAc...) asparagine; by host glycan is linked to N121.

It localises to the secreted. This is Putative lectin L633 from Acanthamoeba polyphaga (Amoeba).